Reading from the N-terminus, the 431-residue chain is Glycerol-3-phosphate dehydrogenase [NAD(P)+] (431 aa).

Positions 1 to 19 (MTSANDKSTDTNVDSTQAE) are enriched in polar residues. Residues 1–25 (MTSANDKSTDTNVDSTQAEQKMAEK) form a disordered region. Residues S79, F80, R100, and K173 each contribute to the NADPH site. 2 residues coordinate sn-glycerol 3-phosphate: K173 and G201. A205 contacts NADPH. Sn-glycerol 3-phosphate contacts are provided by K256, D309, S319, R320, and N321. K256 serves as the catalytic Proton acceptor. Position 320 (R320) interacts with NADPH. E346 contributes to the NADPH binding site.

This sequence belongs to the NAD-dependent glycerol-3-phosphate dehydrogenase family.

It is found in the cytoplasm. The catalysed reaction is sn-glycerol 3-phosphate + NAD(+) = dihydroxyacetone phosphate + NADH + H(+). It carries out the reaction sn-glycerol 3-phosphate + NADP(+) = dihydroxyacetone phosphate + NADPH + H(+). The protein operates within membrane lipid metabolism; glycerophospholipid metabolism. Functionally, catalyzes the reduction of the glycolytic intermediate dihydroxyacetone phosphate (DHAP) to sn-glycerol 3-phosphate (G3P), the key precursor for phospholipid synthesis. The sequence is that of Glycerol-3-phosphate dehydrogenase [NAD(P)+] from Psychrobacter arcticus (strain DSM 17307 / VKM B-2377 / 273-4).